We begin with the raw amino-acid sequence, 209 residues long: Xanthine phosphoribosyltransferase 1 (209 aa).

Ser79 bears the Phosphoserine mark.

The protein resides in the cytoplasm. Its function is as follows. May act as a xanthine phosphoribosyltransferase involved in the synthesis of purine nucleotides. Such activity is however unclear in vivo. The sequence is that of Xanthine phosphoribosyltransferase 1 (XPT1) from Saccharomyces cerevisiae (strain ATCC 204508 / S288c) (Baker's yeast).